A 764-amino-acid chain; its full sequence is Complement factor B (764 aa).

An N-terminal signal peptide occupies residues 1-25 (MGSNLSPQLCLMPFILGLLSGGVTT). Sushi domains are found at residues 35 to 100 (ESCS…ECRA), 101 to 160 (IHCP…ICDN), and 163 to 220 (GYCS…SCQD). 6 disulfides stabilise this stretch: Cys-37–Cys-76, Cys-62–Cys-98, Cys-103–Cys-145, Cys-131–Cys-158, Cys-165–Cys-205, and Cys-191–Cys-218. Asn-122 and Asn-142 each carry an N-linked (GlcNAc...) asparagine glycan. The 200-residue stretch at 270–469 (NIYLVLDGSD…NLEDVFYQMI (200 aa)) folds into the VWFA domain. Positions 278 and 280 each coordinate Mg(2+). Residue Asn-285 is glycosylated (N-linked (GlcNAc...) asparagine). A Mg(2+)-binding site is contributed by Thr-353. The N-linked (GlcNAc...) asparagine glycan is linked to Asn-378. The region spanning 477 to 757 (LCGMVWEHRK…VLPWLKEKLQ (281 aa)) is the Peptidase S1 domain. Cystine bridges form between Cys-478-Cys-596, Cys-511-Cys-527, Cys-599-Cys-615, Cys-656-Cys-682, and Cys-695-Cys-725. Residues His-526 and Asp-576 each act as charge relay system in the active site. The active-site Charge relay system is Ser-699.

It belongs to the peptidase S1 family. Monomer. Interacts with complement C3b; this interaction is dependent on the presence of Mg(2+). In terms of assembly, catalytic component of the C3 convertase of the alternative complement pathway, also named C3bBb, composed of complement factor B Bb and complement C3b. Catalytic component of the C5 convertase of the alternative complement pathway, also named C3bBb3b, composed of complement factor B Bb and additional molecules of complement C3b. Interacts to CFP; this interaction contributes to the stabilization of the active C3-convertase enzyme complex. Mg(2+) serves as cofactor. It depends on Mn(2+) as a cofactor. Post-translationally, cleaved by CFD following activation of the alternative complement system, generating Ba and Bb chains. Cleavage and activation takes place when CFB is already associated with complement C3b.

It is found in the secreted. It localises to the cell surface. It carries out the reaction Cleavage of Arg-|-Ser bond in complement component C3 alpha-chain to yield C3a and C3b, and Arg-|-Xaa bond in complement component C5 alpha-chain to yield C5a and C5b.. In terms of biological role, precursor of the catalytic component of the C3 and C5 convertase complexes of the alternative pathway of the complement system, a cascade of proteins that leads to phagocytosis and breakdown of pathogens and signaling that strengthens the adaptive immune system. The alternative complement pathway acts as an amplification loop that enhances other complement pathways (classical, lectin and GZMK) by promoting formation of additional C3 and C5 convertases. CFB is cleaved and activated by CFD to generate Ba and Bb chains; Bb chain constituting the catalytic component of the C3 and C5 convertases. Functionally, serine protease component of the complement C3 and C5 convertase complexes of the alternative complement pathway. Following cleavage and activation by factor D (CFD), forms the C3 convertase together with complement C3b. As part of the C3 convertase, cleaves and activates C3 into C3a anaphylatoxin and C3b opsonin, the next components of the complement pathways. When an additional complement C3b molecule binds to the C3 convertase, forms the C5 convertase, which cleaves and activates C5 into C5a anaphylatoxin and C5b component of the membrane attack complex. Its function is as follows. Involved in proliferation and differentiation of preactivated B-lymphocytes, rapid spreading of peripheral blood monocytes, stimulation of lymphocyte blastogenesis and lysis of erythrocytes. The sequence is that of Complement factor B (CFB) from Pan troglodytes (Chimpanzee).